Consider the following 575-residue polypeptide: Probable cytochrome P450 514A1 (575 aa).

Residues 4 to 24 (IFTIILTITILVLSLILKDLL) form a helical membrane-spanning segment. Position 448 (Cys-448) interacts with heme.

Belongs to the cytochrome P450 family. Requires heme as cofactor.

It localises to the membrane. The protein is Probable cytochrome P450 514A1 (cyp514A1) of Dictyostelium discoideum (Social amoeba).